The primary structure comprises 292 residues: Diaminopimelate epimerase (292 aa).

3 residues coordinate substrate: asparagine 13, glutamine 46, and asparagine 66. The active-site Proton donor is the cysteine 75. Substrate-binding positions include 76-77 (GN), asparagine 166, asparagine 199, and 217-218 (ER). Cysteine 226 serves as the catalytic Proton acceptor. A substrate-binding site is contributed by 227–228 (GT).

It belongs to the diaminopimelate epimerase family. As to quaternary structure, homodimer.

The protein resides in the cytoplasm. It catalyses the reaction (2S,6S)-2,6-diaminopimelate = meso-2,6-diaminopimelate. It functions in the pathway amino-acid biosynthesis; L-lysine biosynthesis via DAP pathway; DL-2,6-diaminopimelate from LL-2,6-diaminopimelate: step 1/1. In terms of biological role, catalyzes the stereoinversion of LL-2,6-diaminopimelate (L,L-DAP) to meso-diaminopimelate (meso-DAP), a precursor of L-lysine and an essential component of the bacterial peptidoglycan. The chain is Diaminopimelate epimerase from Ralstonia pickettii (strain 12J).